A 318-amino-acid polypeptide reads, in one-letter code: MANTLEQLKPITTIVADTGDIEAIKRYQPEDATTNPSLILKASQIPEYSDLIENAINWAKSQSDDLEQQIEDAGDKLAVNIGLEILKIVPGRISTEVDARLSFDKTASIAKAHKLIQLYKEAGIDKSRILIKLASTWEGICAAKELEQEGINCNLTLLFSFAQARACAEAGVYLISPFVGRILDWYKKDTGLEYSAAEDPGVVSVTSIYNYYKRHGFNTVVMGASFRNTGEIIELAGCDRLTIGPALLEELSNSNTPIIQKLLPATETIAAQPAMSEAQFRWEFNEDPMAVEKLAEGIRNFAVDQGKLEVMLKAELSS.

The active-site Schiff-base intermediate with substrate is the Lys-132.

Belongs to the transaldolase family. Type 1 subfamily. Homodimer.

It is found in the cytoplasm. It carries out the reaction D-sedoheptulose 7-phosphate + D-glyceraldehyde 3-phosphate = D-erythrose 4-phosphate + beta-D-fructose 6-phosphate. It functions in the pathway carbohydrate degradation; pentose phosphate pathway; D-glyceraldehyde 3-phosphate and beta-D-fructose 6-phosphate from D-ribose 5-phosphate and D-xylulose 5-phosphate (non-oxidative stage): step 2/3. Transaldolase is important for the balance of metabolites in the pentose-phosphate pathway. The sequence is that of Transaldolase from Shewanella piezotolerans (strain WP3 / JCM 13877).